We begin with the raw amino-acid sequence, 345 residues long: N-acetyl-gamma-glutamyl-phosphate reductase (345 aa).

Cys-149 is an active-site residue.

It belongs to the NAGSA dehydrogenase family. Type 1 subfamily.

It localises to the cytoplasm. It carries out the reaction N-acetyl-L-glutamate 5-semialdehyde + phosphate + NADP(+) = N-acetyl-L-glutamyl 5-phosphate + NADPH + H(+). Its pathway is amino-acid biosynthesis; L-arginine biosynthesis; N(2)-acetyl-L-ornithine from L-glutamate: step 3/4. In terms of biological role, catalyzes the NADPH-dependent reduction of N-acetyl-5-glutamyl phosphate to yield N-acetyl-L-glutamate 5-semialdehyde. In Bacillus cereus (strain 03BB102), this protein is N-acetyl-gamma-glutamyl-phosphate reductase.